Consider the following 37-residue polypeptide: Mu-agatoxin-Aa1b (37 aa).

Cystine bridges form between cysteine 2–cysteine 18, cysteine 9–cysteine 23, cysteine 17–cysteine 33, and cysteine 25–cysteine 31. Serine 37 bears the Serine amide mark.

This sequence belongs to the neurotoxin 07 (Beta/delta-agtx) family. 01 (aga-2) subfamily. As to expression, expressed by the venom gland.

The protein resides in the secreted. Functionally, insecticidal neurotoxin that induces an irreversible spastic paralysis when injected into insects. Modifies presynaptic voltage-gated sodium channels (Nav), causing them to open at the normal resting potential of the nerve. This leads to spontaneous release of neurotransmitter and repetitive action potentials in motor neurons. This is Mu-agatoxin-Aa1b from Agelenopsis aperta (North American funnel-web spider).